A 252-amino-acid polypeptide reads, in one-letter code: Short chain dehydrogenase andC (252 aa).

An N-terminal signal peptide occupies residues 1 to 25 (MGFLQDKVVIITGAAAGIGLATATA). 3 residues coordinate NADP(+): Ile-11, Asp-57, and Arg-119. Ser-137 functions as the Proton donor in the catalytic mechanism. NADP(+) contacts are provided by Tyr-151 and Lys-155. Tyr-151 functions as the Proton acceptor in the catalytic mechanism. The active-site Lowers pKa of active site Tyr is the Lys-155.

Belongs to the short-chain dehydrogenases/reductases (SDR) family.

It participates in secondary metabolite biosynthesis; terpenoid biosynthesis. Its function is as follows. Short chain dehydrogenase; part of the gene cluster that mediates the biosynthesis of anditomin, a fungal meroterpenoid. The first step of the pathway is the synthesis of 3,5-dimethylorsellinic acid (DMOA) by the polyketide synthase andM. DMOA is then converted to the phthalide compound 5,7-dihydroxy-4,6-dimethylphthalide (DHDMP) by the cytochrome P450 monooxygenase andK, which is further prenylated by the prenyltransferase andD to yield farnesyl-DHDMP. Further epoxidation by the FAD-dependent monooxygenase andE leads to epoxyfarnesyl-DHDMP. The next step involves the terpene cyclase andB that converts epoxyfarnesyl-DHDMP into preandiloid A through opening of the epoxide ring followed by the cyclization of the farnesyl moiety. Preandiloid A is in turn oxidized at the C-3 hydroxyl group to yield preandiloid B by the dehydrogenase andC. The dioxygenase andA is solely responsible for the dehydrogenation of preandiloid B leading to the enone preandiloid C, as well as for the intriguing structural rearrangement to generate the bicyclo[2.2.2]octane core, transforming preandiloid C into andiconin. FAD-binding monooxygenase andJ then produces andilesin D which is reduced by dehydrogenase andI to yield andilesin A. Action of acetyltransferase andG followed by a spontaneous acetate elimination leads then to andilesin B, which is in turn substrate of the short chain dehydrogenase andH to yield andilesin C. Finally, the dioxygenase andF catalyzes the transformation of andilesin C to anditomin. The sequence is that of Short chain dehydrogenase andC from Emericella variicolor (Aspergillus stellatus).